The primary structure comprises 579 residues: UPF0324 membrane protein DVU_0943 (579 aa).

10 helical membrane-spanning segments follow: residues 26–45 (YWAI…LFLA), 193–215 (AFNI…AIGM), 225–243 (FLVG…QMMG), 250–272 (YWGI…TVGT), 305–327 (IGIP…TFIF), 369–391 (LTLS…PAFI), 430–452 (AATI…AVYW), 473–495 (FPKF…GSLG), 515–533 (LRGW…ATNF), and 546–568 (LILY…YIMF).

Belongs to the UPF0324 family.

The protein resides in the cell membrane. In Nitratidesulfovibrio vulgaris (strain ATCC 29579 / DSM 644 / CCUG 34227 / NCIMB 8303 / VKM B-1760 / Hildenborough) (Desulfovibrio vulgaris), this protein is UPF0324 membrane protein DVU_0943.